The following is a 454-amino-acid chain: tRNA modification GTPase MnmE (454 aa).

(6S)-5-formyl-5,6,7,8-tetrahydrofolate contacts are provided by R23, E80, and K120. The region spanning 216–377 is the TrmE-type G domain; sequence GMKVVIAGRP…LRDHLKQSMG (162 aa). Residue N226 participates in K(+) binding. GTP-binding positions include 226–231, 245–251, 270–273, 335–338, and 358–360; these read NAGKSS, TAIAGTT, DTAG, NKAD, and SAR. S230 lines the Mg(2+) pocket. K(+) is bound by residues T245, I247, and T250. T251 contacts Mg(2+). K454 serves as a coordination point for (6S)-5-formyl-5,6,7,8-tetrahydrofolate.

It belongs to the TRAFAC class TrmE-Era-EngA-EngB-Septin-like GTPase superfamily. TrmE GTPase family. Homodimer. Heterotetramer of two MnmE and two MnmG subunits. K(+) is required as a cofactor.

It is found in the cytoplasm. Functionally, exhibits a very high intrinsic GTPase hydrolysis rate. Involved in the addition of a carboxymethylaminomethyl (cmnm) group at the wobble position (U34) of certain tRNAs, forming tRNA-cmnm(5)s(2)U34. The sequence is that of tRNA modification GTPase MnmE from Pectobacterium atrosepticum (strain SCRI 1043 / ATCC BAA-672) (Erwinia carotovora subsp. atroseptica).